The chain runs to 152 residues: UPF0719 transmembrane protein MT2674.1 (152 aa).

A run of 4 helical transmembrane segments spans residues 21–41, 62–82, 92–112, and 131–151; these read VATVLYFLVGAAVLVAGFLMV, VVLAATMYVALAIVTIAAIYA, IGVAVYGIVGVALQGVALVIL, and PAVFATAVMLLAVAGVIAAAL.

It belongs to the UPF0719 family.

The protein resides in the cell membrane. The sequence is that of UPF0719 transmembrane protein MT2674.1 from Mycobacterium tuberculosis (strain CDC 1551 / Oshkosh).